The sequence spans 210 residues: CASP-like protein 3A2 (210 aa).

Residues Met-1–Asn-45 are Cytoplasmic-facing. The chain crosses the membrane as a helical span at residues Val-46–Ala-66. The Extracellular portion of the chain corresponds to Gln-67–Glu-92. A helical membrane pass occupies residues Tyr-93 to Val-113. Topologically, residues Ser-114–His-128 are cytoplasmic. Residues Ala-129–Ala-149 traverse the membrane as a helical segment. The Extracellular portion of the chain corresponds to Ala-150–Asp-178. N-linked (GlcNAc...) asparagine glycosylation occurs at Asn-157. Residues His-179 to Val-199 form a helical membrane-spanning segment. Topologically, residues Gln-200–Tyr-210 are cytoplasmic.

The protein belongs to the Casparian strip membrane proteins (CASP) family. In terms of assembly, homodimer and heterodimers.

It is found in the cell membrane. The protein is CASP-like protein 3A2 of Populus trichocarpa (Western balsam poplar).